A 340-amino-acid polypeptide reads, in one-letter code: Cysteinyl leukotriene receptor 1 (340 aa).

The Extracellular portion of the chain corresponds to 1–31 (MDETGNPTIPPASNNTCYDSIDDFRNQVYST). A glycan (N-linked (GlcNAc...) asparagine) is linked at asparagine 14. A helical membrane pass occupies residues 32–52 (LYSMISVVGFFGNGFVLYVLV). Residues 53 to 60 (KTYHEKSA) lie on the Cytoplasmic side of the membrane. Residues 61-81 (FQVYMINLAVADLLCVCTLPL) traverse the membrane as a helical segment. At 82–109 (RVAYYVHKGIWLFGDFLCRLSTYALYVN) the chain is on the extracellular side. Cysteine 99 and cysteine 176 are joined by a disulfide. A helical transmembrane segment spans residues 110–130 (LYCSIFFMTAMSFFRCVAIVF). Residues 131–144 (PVQNISLVTQKKAR) lie on the Cytoplasmic side of the membrane. A helical membrane pass occupies residues 145–165 (LVCIAIWMFVILTSSPFLMAN). Topologically, residues 166–196 (TYKDEKNNTKCFEPPQDNQAKNYVLILHYVS) are extracellular. Asparagine 172 carries an N-linked (GlcNAc...) asparagine glycan. A helical transmembrane segment spans residues 197 to 217 (LFIGFIIPFITIIVCYTMIIF). Topologically, residues 218-233 (TLLKSSMKKNLSSRKR) are cytoplasmic. The helical transmembrane segment at 234-254 (AIGMIIVVTAAFLVSFMPYHI) threads the bilayer. At 255–279 (QRTIHLHFLHNKTKPCDSILRMQKS) the chain is on the extracellular side. N-linked (GlcNAc...) asparagine glycosylation is present at asparagine 265. The chain crosses the membrane as a helical span at residues 280 to 300 (VVITLSLAASNCCFDPLLYFF). The Cytoplasmic portion of the chain corresponds to 301–340 (SGGNFRRRLSTIRKYSLSSMTYIPKKKTSLPQKGKDICKE).

The protein belongs to the G-protein coupled receptor 1 family.

It localises to the cell membrane. In terms of biological role, receptor for cysteinyl leukotrienes mediating bronchoconstriction of individuals with and without asthma. Stimulation by LTD4 results in the contraction and proliferation of smooth muscle, edema, eosinophil migration and damage to the mucus layer in the lung. This response is mediated via a G-protein that activates a phosphatidylinositol-calcium second messenger system. This Cavia porcellus (Guinea pig) protein is Cysteinyl leukotriene receptor 1 (CYSLTR1).